Consider the following 605-residue polypeptide: IQ domain-containing protein IQM2 (605 aa).

An IQ domain is found at 105 to 134 (KHEAAIKLQKVYKSFRTRRKLADCAVLVEQ). The disordered stretch occupies residues 408–505 (QDKVDPSGEE…EEGETKESEV (98 aa)). Positions 425–440 (SISRKQSDLETPEKME) are enriched in basic and acidic residues. Acidic residues predominate over residues 462 to 480 (DYDSGDDEEEEEEMFELEQ). Residues 481 to 490 (ESMPSEQSSP) are compositionally biased toward low complexity. The segment covering 491–505 (RGEEKEEGETKESEV) has biased composition (basic and acidic residues).

In terms of tissue distribution, expressed in rosette and cauline leaves, stems, flowers and siliques, and at lower levels in roots.

It is found in the cytoplasm. The protein resides in the nucleus. Its function is as follows. May be involved in biotic and abiotic stress responses. The protein is IQ domain-containing protein IQM2 of Arabidopsis thaliana (Mouse-ear cress).